The following is a 423-amino-acid chain: Serine--tRNA ligase (423 aa).

An L-serine-binding site is contributed by 229–231 (TAE). Position 260–262 (260–262 (RKE)) interacts with ATP. An L-serine-binding site is contributed by E283. Position 347-350 (347-350 (EVSS)) interacts with ATP. An L-serine-binding site is contributed by S383.

The protein belongs to the class-II aminoacyl-tRNA synthetase family. Type-1 seryl-tRNA synthetase subfamily. Homodimer. The tRNA molecule binds across the dimer.

Its subcellular location is the cytoplasm. The catalysed reaction is tRNA(Ser) + L-serine + ATP = L-seryl-tRNA(Ser) + AMP + diphosphate + H(+). It carries out the reaction tRNA(Sec) + L-serine + ATP = L-seryl-tRNA(Sec) + AMP + diphosphate + H(+). It participates in aminoacyl-tRNA biosynthesis; selenocysteinyl-tRNA(Sec) biosynthesis; L-seryl-tRNA(Sec) from L-serine and tRNA(Sec): step 1/1. In terms of biological role, catalyzes the attachment of serine to tRNA(Ser). Is also able to aminoacylate tRNA(Sec) with serine, to form the misacylated tRNA L-seryl-tRNA(Sec), which will be further converted into selenocysteinyl-tRNA(Sec). The polypeptide is Serine--tRNA ligase (Chloroflexus aurantiacus (strain ATCC 29366 / DSM 635 / J-10-fl)).